The chain runs to 209 residues: Large ribosomal subunit protein uL3 (209 aa).

The tract at residues 141 to 163 is disordered; it reads RAVGSMGASSDPSRTFKNKRMPG.

This sequence belongs to the universal ribosomal protein uL3 family. Part of the 50S ribosomal subunit. Forms a cluster with proteins L14 and L19.

One of the primary rRNA binding proteins, it binds directly near the 3'-end of the 23S rRNA, where it nucleates assembly of the 50S subunit. The protein is Large ribosomal subunit protein uL3 of Clostridium botulinum (strain Langeland / NCTC 10281 / Type F).